The primary structure comprises 283 residues: Bis(5'-nucleosyl)-tetraphosphatase, symmetrical (283 aa).

Belongs to the Ap4A hydrolase family.

The catalysed reaction is P(1),P(4)-bis(5'-adenosyl) tetraphosphate + H2O = 2 ADP + 2 H(+). Functionally, hydrolyzes diadenosine 5',5'''-P1,P4-tetraphosphate to yield ADP. This Serratia proteamaculans (strain 568) protein is Bis(5'-nucleosyl)-tetraphosphatase, symmetrical.